Here is a 439-residue protein sequence, read N- to C-terminus: Xaa-Pro dipeptidase (439 aa).

The Mn(2+) site is built by Asp-244, Asp-255, His-335, Glu-380, and Glu-419.

This sequence belongs to the peptidase M24B family. Bacterial-type prolidase subfamily. Requires Mn(2+) as cofactor.

The enzyme catalyses Xaa-L-Pro dipeptide + H2O = an L-alpha-amino acid + L-proline. In terms of biological role, splits dipeptides with a prolyl residue in the C-terminal position. This is Xaa-Pro dipeptidase from Shewanella oneidensis (strain ATCC 700550 / JCM 31522 / CIP 106686 / LMG 19005 / NCIMB 14063 / MR-1).